A 304-amino-acid polypeptide reads, in one-letter code: Acetylglutamate kinase (304 aa).

Substrate-binding positions include 75–76 (GG), R97, and N202.

Belongs to the acetylglutamate kinase family. ArgB subfamily.

It localises to the cytoplasm. The catalysed reaction is N-acetyl-L-glutamate + ATP = N-acetyl-L-glutamyl 5-phosphate + ADP. It participates in amino-acid biosynthesis; L-arginine biosynthesis; N(2)-acetyl-L-ornithine from L-glutamate: step 2/4. In terms of biological role, catalyzes the ATP-dependent phosphorylation of N-acetyl-L-glutamate. In Parvibaculum lavamentivorans (strain DS-1 / DSM 13023 / NCIMB 13966), this protein is Acetylglutamate kinase.